Here is a 109-residue protein sequence, read N- to C-terminus: Beta-keratin-related protein (109 aa).

An N-acetylserine modification is found at Ser2.

Belongs to the avian keratin family.

This chain is Beta-keratin-related protein (BKJ), found in Coturnix japonica (Japanese quail).